The chain runs to 200 residues: Recombination protein RecR (200 aa).

Residues 58–75 (CPDCFCLKTSKTSSCDFC) form a C4-type zinc finger. A Toprim domain is found at 82–177 (SFLCIVATPK…KISRLALGMP (96 aa)).

It belongs to the RecR family.

Functionally, may play a role in DNA repair. It seems to be involved in an RecBC-independent recombinational process of DNA repair. It may act with RecF and RecO. The polypeptide is Recombination protein RecR (Chlamydia muridarum (strain MoPn / Nigg)).